The following is a 194-amino-acid chain: MAIKLIVGLANPGAEYAATRHNAGAWYVDLLAERLRAPLREEPKFFGYTSRITLEGEDVRLLVPTTFMNLSGKAVGAMASFYRIQPDEILVAHDELDLPPGVAKFKLGGGHGGHNGLKDIISKLGNNPNFHRLRVGIGHPGDKSKVVGFVLGKPPVSEQKLIDEAIYEAARCTELWFKEGLAKATSRLHTFKAQ.

Tyr16 is a tRNA binding site. His21 serves as the catalytic Proton acceptor. The tRNA site is built by Phe67, Asn69, and Asn115.

This sequence belongs to the PTH family. As to quaternary structure, monomer.

It localises to the cytoplasm. It catalyses the reaction an N-acyl-L-alpha-aminoacyl-tRNA + H2O = an N-acyl-L-amino acid + a tRNA + H(+). Hydrolyzes ribosome-free peptidyl-tRNAs (with 1 or more amino acids incorporated), which drop off the ribosome during protein synthesis, or as a result of ribosome stalling. Functionally, catalyzes the release of premature peptidyl moieties from peptidyl-tRNA molecules trapped in stalled 50S ribosomal subunits, and thus maintains levels of free tRNAs and 50S ribosomes. This Salmonella heidelberg (strain SL476) protein is Peptidyl-tRNA hydrolase.